A 798-amino-acid polypeptide reads, in one-letter code: Integrin beta-7 (798 aa).

A signal peptide spans 1 to 19 (MVALPMVLVLLLVLSRGES). The Extracellular portion of the chain corresponds to 20 to 723 (ELDAKIPSTG…VRPQEKGADH (704 aa)). Positions 44–92 (SCQPAPSCQKCILSHPSCAWCKQLNFTASGEAEARRCARREELLARGCP) constitute a PSI domain. Cystine bridges form between C51–C476, C54–C80, C64–C91, C216–C223, C271–C311, C412–C428, and C448–C474. Residue N68 is glycosylated (N-linked (GlcNAc...) asparagine). Residues 98 to 124 (EPRGQQEVLQDQPLSQGARGEGATQLA) form a disordered region. Residues 150 to 389 (YPVDLYYLMD…QLIMDAYNSL (240 aa)) enclose the VWFA domain. Positions 161 and 163 each coordinate Mg(2+). The Ca(2+) site is built by S163, D166, D167, and D198. The Ca(2+) site is built by N254, D256, P258, and E259. E259 is a Mg(2+) binding site. The N-linked (GlcNAc...) asparagine glycan is linked to N279. Ca(2+)-binding residues include D289 and E373. N434 carries an N-linked (GlcNAc...) asparagine glycan. N477 carries an N-linked (GlcNAc...) asparagine glycan. Intrachain disulfides connect C478–C497, C488–C500, C502–C511, C513–C545, C527–C543, C537–C548, C550–C559, C561–C582, C566–C580, C574–C585, C587–C596, C598–C621, C605–C619, C613–C624, C626–C635, C638–C641, C645–C688, C651–C670, and C654–C666. I-EGF domains are found at residues 478–512 (CSDT…RLCE), 513–560 (CSVA…HLCE), 561–597 (CDDA…RACE), and 598–636 (CSGD…ALCD). N531 is a glycosylation site (N-linked (GlcNAc...) asparagine). Residue N590 is glycosylated (N-linked (GlcNAc...) asparagine). Residues N665 and N674 are each glycosylated (N-linked (GlcNAc...) asparagine). The chain crosses the membrane as a helical span at residues 724-746 (TQAIVLGCVGGIVAVGLGLVLAY). Residues 747–798 (RLSVEIYDRREYSRFEKEQQQLNWKQDSNPLYKSAITTTINPRFQEADSPTL) lie on the Cytoplasmic side of the membrane. A Phosphotyrosine; by Tyr-kinases modification is found at Y778.

It belongs to the integrin beta chain family. Heterodimer of an alpha and a beta subunit. ITGB7/beta-7 associates with either ITGA4/alpha-4 or ITGAE/alpha-E. Integrin ITGA4/ITGB7 interacts with MADCAM1. Integrin ITGA4/ITGB7 interacts with VCAM1 and fibronectin. Interacts with FLNA (via filamin repeats 4, 9, 12, 17, 19, 21, and 23). As to quaternary structure, (Microbial infection) May interact with HIV-1 gp120. In terms of tissue distribution, expressed in a variety of leukocyte lines.

Its subcellular location is the cell membrane. In terms of biological role, integrin ITGA4/ITGB7 (alpha-4/beta-7) (Peyer patches-specific homing receptor LPAM-1) is an adhesion molecule that mediates lymphocyte migration and homing to gut-associated lymphoid tissue (GALT). Integrin ITGA4/ITGB7 interacts with the cell surface adhesion molecules MADCAM1 which is normally expressed by the vascular endothelium of the gastrointestinal tract. Also interacts with VCAM1 and fibronectin, an extracellular matrix component. It recognizes one or more domains within the alternatively spliced CS-1 region of fibronectin. Interactions involve the tripeptide L-D-T in MADCAM1, and L-D-V in fibronectin. Integrin ITGAE/ITGB7 (alpha-E/beta-7, HML-1) is a receptor for E-cadherin. Its function is as follows. (Microbial infection) Binds to HIV-1 gp120, thereby allowing the virus to enter GALT, which is thought to be the major trigger of AIDS disease. Interaction would involve a tripeptide L-D-I in HIV-1 gp120. The chain is Integrin beta-7 (ITGB7) from Homo sapiens (Human).